The primary structure comprises 532 residues: SET and MYND domain-containing protein DDB_G0288495 (532 aa).

Residues P25–I448 enclose the SET domain. An MYND-type; degenerate zinc finger spans residues C70 to C116. The stretch at I199–K240 forms a coiled coil. Residues N204–N234 are disordered. Residues F207 to Q217 show a composition bias toward acidic residues.

It belongs to the class V-like SAM-binding methyltransferase superfamily.

In terms of biological role, probable methyltransferase. This Dictyostelium discoideum (Social amoeba) protein is SET and MYND domain-containing protein DDB_G0288495.